A 327-amino-acid polypeptide reads, in one-letter code: Phenylalanine--tRNA ligase alpha subunit (327 aa).

E252 is a binding site for Mg(2+).

Belongs to the class-II aminoacyl-tRNA synthetase family. Phe-tRNA synthetase alpha subunit type 1 subfamily. As to quaternary structure, tetramer of two alpha and two beta subunits. Mg(2+) is required as a cofactor.

Its subcellular location is the cytoplasm. It carries out the reaction tRNA(Phe) + L-phenylalanine + ATP = L-phenylalanyl-tRNA(Phe) + AMP + diphosphate + H(+). In Aeromonas salmonicida (strain A449), this protein is Phenylalanine--tRNA ligase alpha subunit.